The following is a 74-amino-acid chain: MDLSVKSEANVEYMVEAIKEKLRMVNAGAMRAASFNEEMYEDLRDIYEHVMKRETFSISEMQAITEELGTLIKK.

This sequence belongs to the UPF0435 family.

This Bacillus mycoides (strain KBAB4) (Bacillus weihenstephanensis) protein is UPF0435 protein BcerKBAB4_0386.